A 101-amino-acid chain; its full sequence is Protein snet-1 (101 aa).

An N-terminal signal peptide occupies residues 1-20; the sequence is MARFTPLLMILLALVPLYYS.

In terms of processing, may be degraded by the nep-2 peptidase. As to expression, expressed in coelomocytes, the ASK sensory neurons and interneurons AIB, AIM and PVQ.

It localises to the secreted. Its subcellular location is the perikaryon. In terms of biological role, negatively regulates chemotaxis and olfactory plasticity which is the change from positive chemotaxis to dispersal after prolonged exposure to an odorant. May be down-regulated in response to pheromone exposure, resulting in promotion of olfactory plasticity. This Caenorhabditis elegans protein is Protein snet-1.